Consider the following 513-residue polypeptide: V-type proton ATPase subunit B (513 aa).

Arg-375 lines the ATP pocket. The segment covering 484–503 (ADRKGKGKDKPTTKDTRDTA) has biased composition (basic and acidic residues). The tract at residues 484–513 (ADRKGKGKDKPTTKDTRDTAAPEEENLIDA) is disordered. Residues 504-513 (APEEENLIDA) show a composition bias toward acidic residues.

It belongs to the ATPase alpha/beta chains family. As to quaternary structure, V-ATPase is a heteromultimeric enzyme composed of a peripheral catalytic V1 complex (components A to H) attached to an integral membrane V0 proton pore complex (components: a, c, c', c'', d, e, f and VOA1).

The protein resides in the vacuole membrane. Non-catalytic subunit of the V1 complex of vacuolar(H+)-ATPase (V-ATPase), a multisubunit enzyme composed of a peripheral complex (V1) that hydrolyzes ATP and a membrane integral complex (V0) that translocates protons. V-ATPase is responsible for acidifying and maintaining the pH of intracellular compartments. The sequence is that of V-type proton ATPase subunit B from Neurospora crassa (strain ATCC 24698 / 74-OR23-1A / CBS 708.71 / DSM 1257 / FGSC 987).